Here is a 172-residue protein sequence, read N- to C-terminus: MAKMQAKVQADERDDGLREKMISVNRVTKVVKGGRILGFAALTVVGDGDGRVGMGKGKAKEVPVAVQKAMEQARRNMFKVPLKNGTLQHEVHGKHGASMVLLAPAKDGTGVIAGGPMRAVFDVMGVQNVVAKSHGSTNPYNLVRATLDGLRKQSTPGDIAAKRGKSVEDILG.

The region spanning 17–80 (LREKMISVNR…EQARRNMFKV (64 aa)) is the S5 DRBM domain.

Belongs to the universal ribosomal protein uS5 family. In terms of assembly, part of the 30S ribosomal subunit. Contacts proteins S4 and S8.

Its function is as follows. With S4 and S12 plays an important role in translational accuracy. In terms of biological role, located at the back of the 30S subunit body where it stabilizes the conformation of the head with respect to the body. This Paraburkholderia phytofirmans (strain DSM 17436 / LMG 22146 / PsJN) (Burkholderia phytofirmans) protein is Small ribosomal subunit protein uS5.